A 499-amino-acid polypeptide reads, in one-letter code: Thioredoxin reductase 1, cytoplasmic (499 aa).

FAD-binding positions include 18 to 23 (IGGGSG), 42 to 43 (DF), 58 to 59 (TC), and 63 to 67 (GCIPK). A disulfide bond links C59 and C64. K68 bears the N6-succinyllysine mark. Y131 carries the phosphotyrosine modification. FAD-binding positions include 131-132 (YG) and T161. NADP(+) is bound by residues R166, 198–204 (ASYVALE), 221–222 (RS), R226, 226–228 (RGF), 291–293 (VGR), and K315. Residue Y200 coordinates FAD. FAD contacts are provided by residues D334, 341-343 (ELT), and H472. E341 contributes to the NADP(+) binding site. Residue H472 is the Proton acceptor of the active site. The segment at residues 497-498 (CU) is a cross-link (cysteinyl-selenocysteine (Cys-Sec)). Position 498 (U498) is a non-standard amino acid, selenocysteine.

It belongs to the class-I pyridine nucleotide-disulfide oxidoreductase family. As to quaternary structure, homodimer. The cofactor is FAD. ISGylated.

It localises to the cytoplasm. The enzyme catalyses [thioredoxin]-dithiol + NADP(+) = [thioredoxin]-disulfide + NADPH + H(+). The catalysed reaction is H2O2 + NADPH + H(+) = NADP(+) + 2 H2O. In terms of biological role, reduces disulfideprotein thioredoxin (Trx) to its dithiol-containing form. Homodimeric flavoprotein involved in the regulation of cellular redox reactions, growth and differentiation. Contains a selenocysteine residue at the C-terminal active site that is essential for catalysis. Also has reductase activity on hydrogen peroxide (H2O2). This Rattus norvegicus (Rat) protein is Thioredoxin reductase 1, cytoplasmic.